A 1045-amino-acid chain; its full sequence is Elongation factor 3 (1045 aa).

Isoleucine 42, histidine 44, and serine 83 together coordinate ADP. HEAT repeat units lie at residues 86-123, 125-162, 166-203, 171-209, 205-241, 242-279, and 285-323; these read PYVV…AVNP, AVKA…QAKS, LRMT…TVEN, LIPV…IERF, DIER…EVTP, ATLS…LVED, and PFLN…VGAV. Threonine 392 and histidine 396 together coordinate ADP. 2 consecutive ABC transporter domains span residues 426–641 and 667–993; these read EEGE…YYEL and VKVS…KKED. ADP is bound by residues asparagine 703, glutamate 922, asparagine 925, and histidine 951. The disordered stretch occupies residues 975 to 1045; that stretch reads GHNWVSGQGS…AYVSDDDADF (71 aa). A compositionally biased stretch (basic residues) spans 1020–1031; the sequence is RKKKKERMKKKK.

It belongs to the ABC transporter superfamily. ABCF family. EF3 subfamily.

The protein resides in the cytoplasm. It localises to the cytosol. It catalyses the reaction ATP + H2O = ADP + phosphate + H(+). It functions in the pathway protein biosynthesis; polypeptide chain elongation. Its function is as follows. Ribosome-dependent ATPase that functions in cytoplasmic translation elongation. Required for the ATP-dependent release of deacylated tRNA from the ribosomal E-site during protein biosynthesis. Stimulates the eEF1A-dependent binding of aminoacyl-tRNA to the ribosomal A-site, which has reduced affinity for tRNA as long as the E-site is occupied. Assists translation termination by stimulating the release of nascent protein from the ribosome by release factors. The polypeptide is Elongation factor 3 (Zygosaccharomyces rouxii (strain ATCC 2623 / CBS 732 / NBRC 1130 / NCYC 568 / NRRL Y-229)).